A 471-amino-acid chain; its full sequence is Exoglucanase 2 (471 aa).

The signal sequence occupies residues 1-18 (MIVGILTTLATLATLAAS). Residues 19 to 24 (VPLEER) constitute a propeptide that is removed on maturation. Gln25 carries the pyrrolidone carboxylic acid modification. A CBM1 domain is found at 26–62 (ACSSVWGQCGGQNWSGPTCCASGSTCVYSNDYYSQCL). The span at 64 to 101 (GAASSSSSTRAASTTSRVSPTTSRSSSATPPPGSTTTR) shows a compositional bias: low complexity. Residues 64-108 (GAASSSSSTRAASTTSRVSPTTSRSSSATPPPGSTTTRVPPVGSG) form a disordered region. A linker region spans residues 66–106 (ASSSSSTRAASTTSRVSPTTSRSSSATPPPGSTTTRVPPVG). Residues 107 to 471 (SGTATYSGNP…LLTNANPSFL (365 aa)) form a catalytic region. O-linked (Man...) threonine glycans are attached at residues Thr111 and Thr121. O-linked (Man...) serine glycans are attached at residues Ser130, Ser133, Ser134, and Ser139. Thr146 carries O-linked (Man...) threonine glycosylation. Cysteines 200 and 259 form a disulfide. The Proton donor role is filled by Asp245. N-linked (GlcNAc) asparagine glycosylation occurs at Asn313. Asn334 carries N-linked (GlcNAc...) (high mannose) asparagine glycosylation. A disulfide bridge links Cys392 with Cys439.

It belongs to the glycosyl hydrolase 6 (cellulase B) family. Post-translationally, asn-334 contains mainly a high-mannose-type glycan (Hex(7-9)GlcNAc(2)) in a 3:1 ration with a single GlcNAc. Asn-313 was primarily unglycosylated with a small fraction (18%) bearing a single GlcNAc at this site.

The protein resides in the secreted. The enzyme catalyses Hydrolysis of (1-&gt;4)-beta-D-glucosidic linkages in cellulose and cellotetraose, releasing cellobiose from the non-reducing ends of the chains.. Its function is as follows. Exocellobiohydrolases (CBH) that catalyzes the hydrolysis of 1,4-beta-D-glucosidic bonds in cellulose to release the disaccharide cellobiose. The degradation of cellulose involves an interplay between different cellulolytic enzymes. Hydrolysis starts with endoglucanases (EGs), which cut internal beta-1,4-glucosidic bonds in cellulose to reduce the polymerization degree of the substrate and create new chain ends for exocellobiohydrolases (CBHs). The CBHs release the disaccharide cellobiose from the non-reducing end of the cellulose polymer chain. Finally, beta-1,4-glucosidases hydrolyze the cellobiose and other short cello-oligosaccharides into glucose units. The chain is Exoglucanase 2 (cbh2) from Hypocrea jecorina (Trichoderma reesei).